A 354-amino-acid chain; its full sequence is mRNA cap guanine-N(7) methyltransferase 2 (354 aa).

Positions 8 to 286 (KPEQSHHRLF…LYATFIFQKP (279 aa)) constitute an mRNA cap 0 methyltransferase domain. Residues Lys21, Asp61, and 88-89 (DP) each bind S-adenosyl-L-methionine.

It belongs to the class I-like SAM-binding methyltransferase superfamily. mRNA cap 0 methyltransferase family.

It localises to the nucleus. The catalysed reaction is a 5'-end (5'-triphosphoguanosine)-ribonucleoside in mRNA + S-adenosyl-L-methionine = a 5'-end (N(7)-methyl 5'-triphosphoguanosine)-ribonucleoside in mRNA + S-adenosyl-L-homocysteine. In terms of biological role, mRNA capping methyltransferase that methylates the N7 position of the added guanosine to the 5'-cap structure of mRNAs. Binds RNA containing 5'-terminal GpppC. The protein is mRNA cap guanine-N(7) methyltransferase 2 of Arabidopsis thaliana (Mouse-ear cress).